The sequence spans 89 residues: Small ribosomal subunit protein uS14A (89 aa).

The protein belongs to the universal ribosomal protein uS14 family. As to quaternary structure, contacts proteins S3 and S10. Part of the 30S ribosomal subunit.

Binds 16S rRNA, required for the assembly of 30S particles and may also be responsible for determining the conformation of the 16S rRNA at the A site. Its function is as follows. Non-essential protein. A second form of uS14, it can integrate into the 30S subunit where it partially compensates for loss of the major uS14 protein (AC P12878) in restoring 70S formation, although it does not seem to be incorporated into the ribosome as well as the major uS14. The polypeptide is Small ribosomal subunit protein uS14A (Bacillus subtilis (strain 168)).